A 342-amino-acid polypeptide reads, in one-letter code: MKIDLFDFDLPEELIAQTPLPNRDASRLMVLDKKTGEIRHETFRNILSYLHEGDCLVLNDTRVMPARLYGEKENTGANIEVLLLKQLEGDRWETLVKPAKRVKVGTEITFGDGRLKATCVDTLEHGGRILEFSYQGIFYEVLEQLGEMPLPPYIKEKLDDPERYQTVYAREVGSAAAPTAGLHFTEQLLDDIRAKGVHIAFITLHVGLGTFRPVSVENIEEHDMHAEFYQMTEETARLLNEVRQQGGRIIAVGTTSTRTLETIASKHNGAFVAESGWTDIFIYPGYEFKAIDGLVTNFHLPKSTLIMLVSALAGRENILRAYNAAVKERYRFFSFGDAMLII.

Belongs to the QueA family. As to quaternary structure, monomer.

It localises to the cytoplasm. It catalyses the reaction 7-aminomethyl-7-carbaguanosine(34) in tRNA + S-adenosyl-L-methionine = epoxyqueuosine(34) in tRNA + adenine + L-methionine + 2 H(+). The protein operates within tRNA modification; tRNA-queuosine biosynthesis. Transfers and isomerizes the ribose moiety from AdoMet to the 7-aminomethyl group of 7-deazaguanine (preQ1-tRNA) to give epoxyqueuosine (oQ-tRNA). The polypeptide is S-adenosylmethionine:tRNA ribosyltransferase-isomerase (Geobacillus sp. (strain WCH70)).